The chain runs to 275 residues: Phosphate import ATP-binding protein PstB (275 aa).

The region spanning 28–270 is the ABC transporter domain; sequence IDCRDIRVFY…PREKRTEDYI (243 aa). Residue 60–67 participates in ATP binding; sequence GPSGCGKS.

Belongs to the ABC transporter superfamily. Phosphate importer (TC 3.A.1.7) family. The complex is composed of two ATP-binding proteins (PstB), two transmembrane proteins (PstC and PstA) and a solute-binding protein (PstS).

It is found in the cell inner membrane. It carries out the reaction phosphate(out) + ATP + H2O = ADP + 2 phosphate(in) + H(+). Part of the ABC transporter complex PstSACB involved in phosphate import. Responsible for energy coupling to the transport system. The chain is Phosphate import ATP-binding protein PstB from Hyphomonas neptunium (strain ATCC 15444).